A 130-amino-acid chain; its full sequence is Small ribosomal subunit protein uS11c (130 aa).

This sequence belongs to the universal ribosomal protein uS11 family. In terms of assembly, part of the 30S ribosomal subunit.

It localises to the plastid. The protein localises to the chloroplast. This Tetradesmus obliquus (Green alga) protein is Small ribosomal subunit protein uS11c.